We begin with the raw amino-acid sequence, 232 residues long: 5'-methylthioadenosine/S-adenosylhomocysteine nucleosidase (232 aa).

Glu-14 serves as the catalytic Proton acceptor. Residues Gly-80, Val-154, and Met-175–Glu-176 contribute to the substrate site. The active-site Proton donor is the Asp-199.

The protein belongs to the PNP/UDP phosphorylase family. MtnN subfamily.

It carries out the reaction S-adenosyl-L-homocysteine + H2O = S-(5-deoxy-D-ribos-5-yl)-L-homocysteine + adenine. The catalysed reaction is S-methyl-5'-thioadenosine + H2O = 5-(methylsulfanyl)-D-ribose + adenine. The enzyme catalyses 5'-deoxyadenosine + H2O = 5-deoxy-D-ribose + adenine. It functions in the pathway amino-acid biosynthesis; L-methionine biosynthesis via salvage pathway; S-methyl-5-thio-alpha-D-ribose 1-phosphate from S-methyl-5'-thioadenosine (hydrolase route): step 1/2. Functionally, catalyzes the irreversible cleavage of the glycosidic bond in both 5'-methylthioadenosine (MTA) and S-adenosylhomocysteine (SAH/AdoHcy) to adenine and the corresponding thioribose, 5'-methylthioribose and S-ribosylhomocysteine, respectively. Also cleaves 5'-deoxyadenosine, a toxic by-product of radical S-adenosylmethionine (SAM) enzymes, into 5-deoxyribose and adenine. The sequence is that of 5'-methylthioadenosine/S-adenosylhomocysteine nucleosidase from Actinobacillus pleuropneumoniae serotype 5b (strain L20).